A 578-amino-acid chain; its full sequence is Arginine--tRNA ligase (578 aa).

The 'HIGH' region signature appears at 127–137; sequence PNLAKEMHVGH.

The protein belongs to the class-I aminoacyl-tRNA synthetase family. As to quaternary structure, monomer.

It is found in the cytoplasm. The catalysed reaction is tRNA(Arg) + L-arginine + ATP = L-arginyl-tRNA(Arg) + AMP + diphosphate. The protein is Arginine--tRNA ligase of Pseudomonas putida (strain ATCC 47054 / DSM 6125 / CFBP 8728 / NCIMB 11950 / KT2440).